Consider the following 144-residue polypeptide: Grifin (144 aa).

In terms of domain architecture, Galectin spans 5–133; the sequence is SKAFCAGGLA…DHCLAQVELA (129 aa). Phosphoserine is present on serine 138.

In terms of assembly, homodimer. As to expression, not detected in lens.

The polypeptide is Grifin (GRIFIN) (Homo sapiens (Human)).